Consider the following 234-residue polypeptide: Demethylmenaquinone methyltransferase (234 aa).

S-adenosyl-L-methionine contacts are provided by residues Thr-58, Asp-79, and 106–107 (NA).

It belongs to the class I-like SAM-binding methyltransferase superfamily. MenG/UbiE family.

The catalysed reaction is a 2-demethylmenaquinol + S-adenosyl-L-methionine = a menaquinol + S-adenosyl-L-homocysteine + H(+). The protein operates within quinol/quinone metabolism; menaquinone biosynthesis; menaquinol from 1,4-dihydroxy-2-naphthoate: step 2/2. Functionally, methyltransferase required for the conversion of demethylmenaquinol (DMKH2) to menaquinol (MKH2). The sequence is that of Demethylmenaquinone methyltransferase from Geobacillus sp. (strain WCH70).